The following is a 300-amino-acid chain: Endonuclease III-like protein 1 (300 aa).

The N-terminal 19 residues, Met1–Ala19, are a transit peptide targeting the mitochondrion. The tract at residues Met1–His53 is disordered. The span at Gly22–Arg37 shows a compositional bias: basic and acidic residues. Residues Lys38–Lys51 show a composition bias toward basic residues. Residues Arg187–His211 enclose the HhH domain. Lys208 acts as the Nucleophile; for N-glycosylase activity in catalysis. Residues Cys278, Cys285, Cys288, and Cys294 each contribute to the [4Fe-4S] cluster site.

This sequence belongs to the Nth/MutY family. Interacts with YBX1. Interacts with ERCC5/XPG; the interaction stimulates NTHL1 activity and NTHL1 binding to its DNA substrate. [4Fe-4S] cluster is required as a cofactor. Post-translationally, ubiquitinated by TRIM26; leading to proteasomal degradation. In terms of tissue distribution, widely expressed.

Its subcellular location is the nucleus. It is found in the mitochondrion. It catalyses the reaction 2'-deoxyribonucleotide-(2'-deoxyribose 5'-phosphate)-2'-deoxyribonucleotide-DNA = a 3'-end 2'-deoxyribonucleotide-(2,3-dehydro-2,3-deoxyribose 5'-phosphate)-DNA + a 5'-end 5'-phospho-2'-deoxyribonucleoside-DNA + H(+). Functionally, bifunctional DNA N-glycosylase with associated apurinic/apyrimidinic (AP) lyase function that catalyzes the first step in base excision repair (BER), the primary repair pathway for the repair of oxidative DNA damage. The DNA N-glycosylase activity releases the damaged DNA base from DNA by cleaving the N-glycosidic bond, leaving an AP site. The AP lyase activity cleaves the phosphodiester bond 3' to the AP site by a beta-elimination. Primarily recognizes and repairs oxidative base damage of pyrimidines. The sequence is that of Endonuclease III-like protein 1 (Nthl1) from Mus musculus (Mouse).